A 285-amino-acid polypeptide reads, in one-letter code: 1-deoxypentalenic acid 11-beta-hydroxylase (285 aa).

Arg-117 contributes to the substrate binding site. Residues His-137 and Asp-139 each coordinate Fe cation. Residues 137–139 (HQD) and Trp-153 each bind 2-oxoglutarate. Arg-188 is a substrate binding site. Residue His-226 participates in Fe cation binding. 2-oxoglutarate is bound by residues Ser-228 and Arg-240.

It belongs to the PhyH family. The cofactor is Fe cation. L-ascorbate is required as a cofactor.

It carries out the reaction 1-deoxypentalenate + 2-oxoglutarate + O2 = 1-deoxy-11beta-hydroxypentalenate + succinate + CO2. It functions in the pathway antibiotic biosynthesis; neopentalenolactone biosynthesis. Catalyzes the conversion of 1-deoxypentalenic acid to 11-beta-hydroxy-1-deoxypentalenic acid in the biosynthesis of neopentalenolactone antibiotic. In Streptomyces avermitilis (strain ATCC 31267 / DSM 46492 / JCM 5070 / NBRC 14893 / NCIMB 12804 / NRRL 8165 / MA-4680), this protein is 1-deoxypentalenic acid 11-beta-hydroxylase (ptlH).